The chain runs to 380 residues: Cytochrome b (380 aa).

The next 4 helical transmembrane spans lie at 34–54 (FGSL…LLAM), 78–99 (WLIR…YLHI), 114–134 (WNTG…GYVL), and 179–199 (FFAL…IHLT). Residues histidine 84 and histidine 98 each contribute to the heme b site. Residues histidine 183 and histidine 197 each coordinate heme b. A ubiquinone is bound at residue histidine 202. Transmembrane regions (helical) follow at residues 227 to 247 (LKDI…ALFS), 289 to 309 (LGGV…PFLH), 321 to 341 (LSQL…WVGS), and 348 to 368 (FIII…ILFP).

This sequence belongs to the cytochrome b family. As to quaternary structure, the cytochrome bc1 complex contains 11 subunits: 3 respiratory subunits (MT-CYB, CYC1 and UQCRFS1), 2 core proteins (UQCRC1 and UQCRC2) and 6 low-molecular weight proteins (UQCRH/QCR6, UQCRB/QCR7, UQCRQ/QCR8, UQCR10/QCR9, UQCR11/QCR10 and a cleavage product of UQCRFS1). This cytochrome bc1 complex then forms a dimer. Requires heme b as cofactor.

The protein resides in the mitochondrion inner membrane. In terms of biological role, component of the ubiquinol-cytochrome c reductase complex (complex III or cytochrome b-c1 complex) that is part of the mitochondrial respiratory chain. The b-c1 complex mediates electron transfer from ubiquinol to cytochrome c. Contributes to the generation of a proton gradient across the mitochondrial membrane that is then used for ATP synthesis. In Thalassoica antarctica (Antarctic petrel), this protein is Cytochrome b (MT-CYB).